A 230-amino-acid chain; its full sequence is Maleylacetoacetate isomerase (230 aa).

The GST N-terminal domain maps to 7-95 (LRVTLYTYFR…YLDEAFPDNP (89 aa)). Residues 17–22 (SSCSAR), Q46, V60, 79–80 (QS), Q123, and 127–129 (NLR) contribute to the glutathione site. A GST C-terminal domain is found at 104–226 (NPQQRALVRS…HWRTQQDTPT (123 aa)).

Belongs to the GST superfamily. Zeta family. It depends on glutathione as a cofactor.

The protein localises to the cytoplasm. It catalyses the reaction 4-maleylacetoacetate = 4-fumarylacetoacetate. The protein operates within amino-acid degradation; L-phenylalanine degradation; acetoacetate and fumarate from L-phenylalanine: step 5/6. The chain is Maleylacetoacetate isomerase (maiA) from Emericella nidulans (strain FGSC A4 / ATCC 38163 / CBS 112.46 / NRRL 194 / M139) (Aspergillus nidulans).